We begin with the raw amino-acid sequence, 130 residues long: MAENQYYGTGRRKSSAARVFIKPGSGNIVINKRSLEEYFGRPTSCMVVKQPLELVDMVEKLDLYITVKGGGISGQAGAIRHGITRALMEYDESLRPVLRAAGYVTRDARRVERKKVGLRKARRRPQFSKR.

The protein belongs to the universal ribosomal protein uS9 family.

The polypeptide is Small ribosomal subunit protein uS9 (Vibrio cholerae serotype O1 (strain ATCC 39541 / Classical Ogawa 395 / O395)).